A 510-amino-acid chain; its full sequence is Hydroperoxide bicyclase CYP5164A3, mitochondrial (510 aa).

The N-terminal 31 residues, 1 to 31, are a transit peptide targeting the mitochondrion; it reads MQRVGAASPTCSSLQAPAAAPPILTISPHHR. Position 452 (cysteine 452) interacts with heme.

Belongs to the cytochrome P450 family. Heme is required as a cofactor.

The protein resides in the mitochondrion. The catalysed reaction is (13S)-hydroperoxy-(9Z,11E,15Z)-octadecatrienoate = plasmodiophorol A. The enzyme catalyses (13S)-hydroperoxy-(9Z,11E,15Z)-octadecatrienoate = plasmodiophorol B. It catalyses the reaction (13S)-hydroperoxy-(9Z,11E,15Z)-octadecatrienoate = ectocarpin A + H2O. It carries out the reaction (15S)-hydroperoxy-(5Z,8Z,11Z,13E,17Z)-eicosapentaenoate = ectocarpin B + H2O. The catalysed reaction is (15S)-hydroperoxy-(5Z,8Z,11Z,13E,17Z)-eicosapentaenoate = ectocarpin C. The enzyme catalyses (15S)-hydroperoxy-(5Z,8Z,11Z,13E,17Z)-eicosapentaenoate + H2O = ectocarpin D. It catalyses the reaction (15S)-hydroperoxy-(5Z,8Z,11Z,13E,17Z)-eicosapentaenoate = 14-oxo-15-hydroxy-(5Z,8Z,11Z,17Z)-eicosatetraenoate. The protein operates within lipid metabolism; oxylipin biosynthesis. Functionally, cytochrome P450 hydroperoxide bicyclase involved in the metabolism of oxylipins 'ectocarpins' natural products, such as hybridalactone, ecklonilactones and derivatives. Isomerizes the hydroperoxides into epoxyalcohols via epoxyallylic radical. Can use alpha-linolenic acid 13(S)-hydroperoxide (13-HPOTE) and eicosapentaenoic acid 15(S)-hydroperoxide (15-HPEPE) as preferred substrate to produce corresponding heterobicyclic oxylipins, such as plasmodiophorol A (6-oxabicyclo[3.1.0]hexane), plasmodiophorol B (2-oxabicyclo[2.2.1]heptane) and plasmodiophorol C (4-hydroxymethyl-1,2-dihydroxycyclopentane) as well as ectocarpin A (3-propenyl-6-oxabicyclo[3.1.0]hexane) formed at about 15:3:3:1 ratio for 13-HPOTE, and analogous to plasmodiophorols A and B including ectocarpin B (3-[(1'E)-propenyl]-6-oxabicyclo[3.1.0]hexane), ectocarpin C, 14-oxo-15-hydroxy-5,8,11,17-eicosate-traenoic acid and ectocarpin D for 15-HPEPE. Barely able to use linoleic acid 13-hydroperoxide (13-HPODE), linoleic acid 9-hydroperoxide (9-HPODE), eicosapentaenoic acid 15-hydroperoxide (15-HPEPE), and alpha-linolenic acid 9-hydroperoxide (9-HPOTE) as substrates. The protein is Hydroperoxide bicyclase CYP5164A3, mitochondrial of Ectocarpus siliculosus (Brown alga).